The following is a 172-amino-acid chain: Adenine phosphoribosyltransferase (172 aa).

Belongs to the purine/pyrimidine phosphoribosyltransferase family. Homodimer.

It localises to the cytoplasm. The catalysed reaction is AMP + diphosphate = 5-phospho-alpha-D-ribose 1-diphosphate + adenine. It functions in the pathway purine metabolism; AMP biosynthesis via salvage pathway; AMP from adenine: step 1/1. Functionally, catalyzes a salvage reaction resulting in the formation of AMP, that is energically less costly than de novo synthesis. The protein is Adenine phosphoribosyltransferase of Prochlorococcus marinus (strain MIT 9313).